The following is a 209-amino-acid chain: MSSRKVLPTKINLINLRRQIRLIRTIKRLLENKREVLLLYLRQYADEYEKVYNEVSKVLSDVYSTYLQGVASEGLSTIQTYADSIPSSLNVNTSIKVLFGVKIPVVDLDESTIQQQPFGNLEISPYILKSREQMSYAFKKILTLIEIESSIRALSGELRKTQRLINAIDTSILPFYQSSSKYIKSVLDDRTREEFTRLKMVRKLLQRRR.

It belongs to the V-ATPase D subunit family. In terms of assembly, has multiple subunits with at least A(3), B(3), C, D, E, F, H, I and proteolipid K(x).

It is found in the cell membrane. Its function is as follows. Component of the A-type ATP synthase that produces ATP from ADP in the presence of a proton gradient across the membrane. This chain is A-type ATP synthase subunit D, found in Sulfolobus acidocaldarius (strain ATCC 33909 / DSM 639 / JCM 8929 / NBRC 15157 / NCIMB 11770).